A 368-amino-acid polypeptide reads, in one-letter code: MNKKTIVVKFGTSTLTQGSPKLNSPHMMEIVRQIAQLHNDGFRIVIVTSGAIAAGRHYLNHPQLPPTIASKQLLAAVGQSQLIQAWEKLFAIYDIHIGQLLLTRADIEDRERFLNARDTLHALLDNHIIPVINENDAVATAEIKVGDNDNLSALVAILVQAEQLYLLTDQQGLFDSDPRKNPEAKLIPVVEQITDHIRSIAGGSGTNLGTGGMMTKIIAADVATRSGIETIIAPGNRPNVIADLAYEQNIGTKFIAHQSDRLESRKQWLFAAPSAGIITIDDGAKNAILEQNKSLLPAGIINVEGRFSRGEVVKICTQSGKDIVLGMPRYNSDALQLIKGRKSADIENVLGYEYGAVAMHRDDMIILS.

Lys-9 is an ATP binding site. The substrate site is built by Ser-49, Asp-136, and Asn-148. Residues 168-169 and 210-216 contribute to the ATP site; these read TD and TGGMMTK. Positions 275–353 constitute a PUA domain; that stretch reads AGIITIDDGA…ADIENVLGYE (79 aa).

The protein belongs to the glutamate 5-kinase family.

Its subcellular location is the cytoplasm. The enzyme catalyses L-glutamate + ATP = L-glutamyl 5-phosphate + ADP. It functions in the pathway amino-acid biosynthesis; L-proline biosynthesis; L-glutamate 5-semialdehyde from L-glutamate: step 1/2. Catalyzes the transfer of a phosphate group to glutamate to form L-glutamate 5-phosphate. The protein is Glutamate 5-kinase of Haemophilus influenzae (strain 86-028NP).